We begin with the raw amino-acid sequence, 130 residues long: S-adenosylmethionine decarboxylase proenzyme (130 aa).

Serine 63 (schiff-base intermediate with substrate; via pyruvic acid) is an active-site residue. At serine 63 the chain carries Pyruvic acid (Ser); by autocatalysis. Histidine 68 acts as the Proton acceptor; for processing activity in catalysis. Cysteine 83 (proton donor; for catalytic activity) is an active-site residue.

The protein belongs to the prokaryotic AdoMetDC family. Type 1 subfamily. As to quaternary structure, heterotetramer of two alpha and two beta chains arranged as a dimer of alpha/beta heterodimers. Pyruvate serves as cofactor. Is synthesized initially as an inactive proenzyme. Formation of the active enzyme involves a self-maturation process in which the active site pyruvoyl group is generated from an internal serine residue via an autocatalytic post-translational modification. Two non-identical subunits are generated from the proenzyme in this reaction, and the pyruvate is formed at the N-terminus of the alpha chain, which is derived from the carboxyl end of the proenzyme. The post-translation cleavage follows an unusual pathway, termed non-hydrolytic serinolysis, in which the side chain hydroxyl group of the serine supplies its oxygen atom to form the C-terminus of the beta chain, while the remainder of the serine residue undergoes an oxidative deamination to produce ammonia and the pyruvoyl group blocking the N-terminus of the alpha chain.

The enzyme catalyses S-adenosyl-L-methionine + H(+) = S-adenosyl 3-(methylsulfanyl)propylamine + CO2. The protein operates within amine and polyamine biosynthesis; S-adenosylmethioninamine biosynthesis; S-adenosylmethioninamine from S-adenosyl-L-methionine: step 1/1. Its function is as follows. Catalyzes the decarboxylation of S-adenosylmethionine to S-adenosylmethioninamine (dcAdoMet), the propylamine donor required for the synthesis of the polyamines spermine and spermidine from the diamine putrescine. The chain is S-adenosylmethionine decarboxylase proenzyme from Thermosipho africanus (strain TCF52B).